The primary structure comprises 578 residues: Penicillin-binding protein activator LpoA (578 aa).

An N-terminal signal peptide occupies residues 1 to 30 (MPTILVQSYGFRQKMKTIFIPTALALLLAA). Cysteine 31 is lipidated: N-palmitoyl cysteine. A lipid anchor (S-diacylglycerol cysteine) is attached at cysteine 31.

It belongs to the LpoA family. In terms of assembly, interacts with PBP1a.

Its subcellular location is the cell outer membrane. Regulator of peptidoglycan synthesis that is essential for the function of penicillin-binding protein 1A (PBP1a). The chain is Penicillin-binding protein activator LpoA from Glaesserella parasuis serovar 5 (strain SH0165) (Haemophilus parasuis).